The primary structure comprises 268 residues: Tryptophan synthase alpha chain (268 aa).

Catalysis depends on proton acceptor residues glutamate 49 and aspartate 60.

It belongs to the TrpA family. In terms of assembly, tetramer of two alpha and two beta chains.

It catalyses the reaction (1S,2R)-1-C-(indol-3-yl)glycerol 3-phosphate + L-serine = D-glyceraldehyde 3-phosphate + L-tryptophan + H2O. It functions in the pathway amino-acid biosynthesis; L-tryptophan biosynthesis; L-tryptophan from chorismate: step 5/5. Functionally, the alpha subunit is responsible for the aldol cleavage of indoleglycerol phosphate to indole and glyceraldehyde 3-phosphate. The polypeptide is Tryptophan synthase alpha chain (Escherichia coli O81 (strain ED1a)).